The primary structure comprises 852 residues: Tiger protein I3 (852 aa).

The signal sequence occupies residues 1 to 18 (MKILLFFILFYLFSFSIS). Topologically, residues 19-830 (YDEVIPLGYE…DVHQYSDARN (812 aa)) are extracellular. 31 N-linked (GlcNAc...) asparagine glycosylation sites follow: Asn31, Asn47, Asn67, Asn97, Asn129, Asn201, Asn215, Asn228, Asn260, Asn323, Asn352, Asn356, Asn404, Asn441, Asn476, Asn483, Asn501, Asn512, Asn574, Asn592, Asn635, Asn658, Asn661, Asn679, Asn680, Asn723, Asn757, Asn761, Asn773, Asn785, and Asn800. In terms of domain architecture, IPT/TIG spans 290–367 (IPSIVNSIPK…SSPIAVSIND (78 aa)). Residues 831-851 (IFQNLLLSILIIIIISLFISN) form a helical membrane-spanning segment. Residue Ile852 is a topological domain, cytoplasmic.

Its subcellular location is the membrane. The chain is Tiger protein I3 (tgrI3) from Dictyostelium discoideum (Social amoeba).